Here is a 38-residue protein sequence, read N- to C-terminus: uncharacterized protein (38 aa).

This is an uncharacterized protein from Haemophilus influenzae (strain ATCC 51907 / DSM 11121 / KW20 / Rd).